We begin with the raw amino-acid sequence, 118 residues long: MVINGLTIVLLSLAVFRLARLLVFDTIMAPLRSLFHEEKEEKDADGNIETYIVIKGTGVRAFIGELLSCYWCTGVWCAGFLILCQAVIPQAAQWLILLLAIAGLAGIIETLVSKWLQE.

The next 3 membrane-spanning stretches (helical) occupy residues 8 to 28 (IVLLSLAVFRLARLLVFDTIM), 62 to 82 (FIGELLSCYWCTGVWCAGFLI), and 92 to 112 (AQWLILLLAIAGLAGIIETLV).

The protein belongs to the UPF0713 family.

It localises to the cell membrane. Involved in sporulation. The polypeptide is Sporulation protein YjcA (yjcA) (Bacillus subtilis (strain 168)).